Here is a 400-residue protein sequence, read N- to C-terminus: Beta-ketoadipyl-CoA thiolase (400 aa).

The active-site Acyl-thioester intermediate is the cysteine 90. Catalysis depends on proton acceptor residues histidine 356 and cysteine 386.

It belongs to the thiolase-like superfamily. Thiolase family.

It carries out the reaction succinyl-CoA + acetyl-CoA = 3-oxoadipyl-CoA + CoA. Its pathway is aromatic compound metabolism; beta-ketoadipate pathway; acetyl-CoA and succinyl-CoA from 3-oxoadipate: step 2/2. In terms of biological role, catalyzes thiolytic cleavage of beta-ketoadipyl-CoA to succinyl-CoA and acetyl-CoA. The chain is Beta-ketoadipyl-CoA thiolase (pcaF) from Pseudomonas putida (Arthrobacter siderocapsulatus).